The following is a 267-amino-acid chain: Acetyl-coenzyme A carboxylase carboxyl transferase subunit beta, chloroplastic (267 aa).

Residues 12–267 (LWKKCDSCNI…TIHMILDLHN (256 aa)) enclose the CoA carboxyltransferase N-terminal domain. Zn(2+) contacts are provided by cysteine 16, cysteine 19, cysteine 35, and cysteine 38. The C4-type zinc finger occupies 16–38 (CDSCNILISKFDFYKHDKVCPEC).

The protein belongs to the AccD/PCCB family. As to quaternary structure, acetyl-CoA carboxylase is a heterohexamer composed of biotin carboxyl carrier protein, biotin carboxylase and 2 subunits each of ACCase subunit alpha and ACCase plastid-coded subunit beta (accD). The cofactor is Zn(2+).

The protein localises to the plastid. It is found in the chloroplast stroma. It carries out the reaction N(6)-carboxybiotinyl-L-lysyl-[protein] + acetyl-CoA = N(6)-biotinyl-L-lysyl-[protein] + malonyl-CoA. It functions in the pathway lipid metabolism; malonyl-CoA biosynthesis; malonyl-CoA from acetyl-CoA: step 1/1. Functionally, component of the acetyl coenzyme A carboxylase (ACC) complex. Biotin carboxylase (BC) catalyzes the carboxylation of biotin on its carrier protein (BCCP) and then the CO(2) group is transferred by the transcarboxylase to acetyl-CoA to form malonyl-CoA. The protein is Acetyl-coenzyme A carboxylase carboxyl transferase subunit beta, chloroplastic of Cyanidium caldarium (Red alga).